A 162-amino-acid chain; its full sequence is Cytochrome c-type biogenesis protein CcmE (162 aa).

Topologically, residues 1-8 (MNPVRKKR) are cytoplasmic. A helical; Signal-anchor for type II membrane protein membrane pass occupies residues 9–29 (LIIVLAIVAGVGAAVGLALSA). Topologically, residues 30-162 (LQQNINLFYT…GETSYNQEGK (133 aa)) are periplasmic. Residues H124 and Y128 each coordinate heme. A compositionally biased stretch (basic and acidic residues) spans 139–148 (DSGQLKHYEN). Positions 139 to 162 (DSGQLKHYENGKAAGETSYNQEGK) are disordered.

Belongs to the CcmE/CycJ family.

Its subcellular location is the cell inner membrane. Its function is as follows. Heme chaperone required for the biogenesis of c-type cytochromes. Transiently binds heme delivered by CcmC and transfers the heme to apo-cytochromes in a process facilitated by CcmF and CcmH. This chain is Cytochrome c-type biogenesis protein CcmE, found in Pseudomonas aeruginosa (strain ATCC 15692 / DSM 22644 / CIP 104116 / JCM 14847 / LMG 12228 / 1C / PRS 101 / PAO1).